The primary structure comprises 483 residues: MRFKQDFFEQLVGYYSQVFPQGISNPHWLAWSEDAAGLIGLTQPTDELLQGMSGNAQIDGASYYAQVYSGHQFGGYSPQLGDGRSIILGEALGPQGTWDVALKGAGPTPYSRHGDGRAVMRSAVREFLISEALHHLHIPTTRALAVIGSDVPVWRETQETAAITVRLAKSHIRFGHFEFFCHSERGAPTKLKQLLDFTISQHYPDLSCDAAGYKAWFARVVTDTAKMIANWQAIGFAHGVMNTDNMSILGDTFDFGPFAFLDTFKEDFICNHSDPEGRYAFGQQPGIGLWNLQRLAQALSSIIASDDLIAALNMYQGELVKHYLILMRGKLGLTTSVTEAELDDQDLALIGGFTSLMERNQLDYTNTWRRFGQLDPSSSHSSLRDDFVDRDGFDAWYQLYQARLGNVEEVEQWQAARNRANPKYILRNYLAQEAIIGVEEGNLAPLQQLQQVLQNPFDEQLEFDDLAKRPPDWGQGLIMSCSS.

Residues Gly-81, Gly-83, Arg-84, Lys-103, Asp-115, Gly-116, Arg-166, and Arg-173 each coordinate ATP. Asp-244 (proton acceptor) is an active-site residue. The Mg(2+) site is built by Asn-245 and Asp-254. Asp-254 contributes to the ATP binding site.

This sequence belongs to the SELO family. The cofactor is Mg(2+). It depends on Mn(2+) as a cofactor.

The enzyme catalyses L-seryl-[protein] + ATP = 3-O-(5'-adenylyl)-L-seryl-[protein] + diphosphate. The catalysed reaction is L-threonyl-[protein] + ATP = 3-O-(5'-adenylyl)-L-threonyl-[protein] + diphosphate. It carries out the reaction L-tyrosyl-[protein] + ATP = O-(5'-adenylyl)-L-tyrosyl-[protein] + diphosphate. It catalyses the reaction L-histidyl-[protein] + UTP = N(tele)-(5'-uridylyl)-L-histidyl-[protein] + diphosphate. The enzyme catalyses L-seryl-[protein] + UTP = O-(5'-uridylyl)-L-seryl-[protein] + diphosphate. The catalysed reaction is L-tyrosyl-[protein] + UTP = O-(5'-uridylyl)-L-tyrosyl-[protein] + diphosphate. Its function is as follows. Nucleotidyltransferase involved in the post-translational modification of proteins. It can catalyze the addition of adenosine monophosphate (AMP) or uridine monophosphate (UMP) to a protein, resulting in modifications known as AMPylation and UMPylation. The sequence is that of Protein nucleotidyltransferase YdiU from Shewanella halifaxensis (strain HAW-EB4).